Reading from the N-terminus, the 382-residue chain is UDP-N-acetylglucosamine--N-acetylmuramyl-(pentapeptide) pyrophosphoryl-undecaprenol N-acetylglucosamine transferase (382 aa).

Residues 17 to 19 (TAG), Asn-137, Arg-179, Ser-213, and Gln-308 contribute to the UDP-N-acetyl-alpha-D-glucosamine site.

It belongs to the glycosyltransferase 28 family. MurG subfamily.

Its subcellular location is the cell membrane. The catalysed reaction is di-trans,octa-cis-undecaprenyl diphospho-N-acetyl-alpha-D-muramoyl-L-alanyl-D-glutamyl-meso-2,6-diaminopimeloyl-D-alanyl-D-alanine + UDP-N-acetyl-alpha-D-glucosamine = di-trans,octa-cis-undecaprenyl diphospho-[N-acetyl-alpha-D-glucosaminyl-(1-&gt;4)]-N-acetyl-alpha-D-muramoyl-L-alanyl-D-glutamyl-meso-2,6-diaminopimeloyl-D-alanyl-D-alanine + UDP + H(+). Its pathway is cell wall biogenesis; peptidoglycan biosynthesis. Cell wall formation. Catalyzes the transfer of a GlcNAc subunit on undecaprenyl-pyrophosphoryl-MurNAc-pentapeptide (lipid intermediate I) to form undecaprenyl-pyrophosphoryl-MurNAc-(pentapeptide)GlcNAc (lipid intermediate II). This is UDP-N-acetylglucosamine--N-acetylmuramyl-(pentapeptide) pyrophosphoryl-undecaprenol N-acetylglucosamine transferase from Rhodococcus opacus (strain B4).